A 279-amino-acid polypeptide reads, in one-letter code: Alcohol dehydrogenase-related 31 kDa protein (279 aa).

11 to 34 contributes to the NAD(+) binding site; sequence YVADCGGIALETSKVLMTKNIAKL. Ser139 lines the substrate pocket. The active-site Proton acceptor is Tyr152.

This sequence belongs to the short-chain dehydrogenases/reductases (SDR) family.

This chain is Alcohol dehydrogenase-related 31 kDa protein (Adhr), found in Drosophila madeirensis (Fruit fly).